The following is a 428-amino-acid chain: Growth/differentiation factor 2 (428 aa).

The N-terminal stretch at 1–22 (MSPGAFRVALLPLFLLVCVTQQ) is a signal peptide. The propeptide occupies 23–318 (KPLQNWEQAS…VGPLLARRKR (296 aa)). Residues asparagine 70 and asparagine 135 are each glycosylated (N-linked (GlcNAc...) asparagine). Cysteine 155 and cysteine 236 are disulfide-bonded. The N-linked (GlcNAc...) asparagine glycan is linked to asparagine 262. Disulfide bonds link cysteine 326–cysteine 392, cysteine 355–cysteine 425, and cysteine 359–cysteine 427. Residues 401–415 (SILYKDDMGVPTLKY) form an interaction with ENG region.

It belongs to the TGF-beta family. In terms of assembly, homodimer; disulfide-linked. Detected in extracellular fluid as mature homodimer, and in complex with its propeptide. Interacts with ACVRL1, BMPR2 and ACVR2B with high affinity (in vitro). Identified in a complex with ACVRL1 and ACVR2B. Has ten times lower affinity for ACVR2A (in vitro). Interacts with ENG, forming a heterotetramer with a 2:2 stoichiometry. Can form a heteromeric complex with ENG and ACVRL1. Interacts with type I receptor ACVR1. Post-translationally, a reversible disulfide bond can be formed between the two subunits in the homodimer; this has no effect on GDF2 activity.

It localises to the secreted. In terms of biological role, potent circulating inhibitor of angiogenesis. Signals through the type I activin receptor ACVRL1 but not other Alks. Signaling through SMAD1 in endothelial cells requires TGF-beta coreceptor endoglin/ENG. The polypeptide is Growth/differentiation factor 2 (Gdf2) (Mus musculus (Mouse)).